Reading from the N-terminus, the 468-residue chain is Arginine biosynthesis bifunctional protein ArgJ, mitochondrial (468 aa).

The N-terminal 23 residues, 1 to 23 (MVGFSRCALSQLRQPKAQLVRSF), are a transit peptide targeting the mitochondrion. Positions 198, 227, 238, 324, 463, and 468 each coordinate substrate. The active-site Nucleophile is the Thr-238.

Belongs to the ArgJ family. As to quaternary structure, heterodimer of an alpha and a beta chain. Post-translationally, the alpha and beta chains are autoproteolytically processed from a single precursor protein within the mitochondrion.

Its subcellular location is the mitochondrion matrix. It carries out the reaction N(2)-acetyl-L-ornithine + L-glutamate = N-acetyl-L-glutamate + L-ornithine. It catalyses the reaction L-glutamate + acetyl-CoA = N-acetyl-L-glutamate + CoA + H(+). The protein operates within amino-acid biosynthesis; L-arginine biosynthesis; L-ornithine and N-acetyl-L-glutamate from L-glutamate and N(2)-acetyl-L-ornithine (cyclic): step 1/1. It participates in amino-acid biosynthesis; L-arginine biosynthesis; N(2)-acetyl-L-ornithine from L-glutamate: step 1/4. Functionally, catalyzes two activities which are involved in the cyclic version of arginine biosynthesis: the synthesis of acetylglutamate from glutamate and acetyl-CoA, and of ornithine by transacetylation between acetylornithine and glutamate. In Podospora anserina (strain S / ATCC MYA-4624 / DSM 980 / FGSC 10383) (Pleurage anserina), this protein is Arginine biosynthesis bifunctional protein ArgJ, mitochondrial.